Here is a 426-residue protein sequence, read N- to C-terminus: Fc receptor-like B (426 aa).

The signal sequence occupies residues 1-17; the sequence is MWPLTALLLLVPSSGQA. Ig-like C2-type domains follow at residues 23–101 and 103–189; these read PILS…LSVS and DWLI…VAVT. 2 cysteine pairs are disulfide-bonded: cysteine 44–cysteine 85 and cysteine 124–cysteine 168. N-linked (GlcNAc...) asparagine glycosylation is present at asparagine 152. Positions 400–426 are disordered; that stretch reads ELRGTPETPTSHFAVSPGTPETTPVES. Positions 406–426 are enriched in polar residues; the sequence is ETPTSHFAVSPGTPETTPVES.

As to expression, expressed at low levels. Expressed in B-lymphocytes. Detected in tonsil, lung, kidney, spleen and placenta. Expressed by a small subset of germinal center B-cells in tonsils and by melanocytes (at protein level).

The protein localises to the cytoplasm. It is found in the endoplasmic reticulum. This is Fc receptor-like B (FCRLB) from Homo sapiens (Human).